A 276-amino-acid chain; its full sequence is MTSMRKKTIGEVLRLARINQGLSLDELQKKTEIQLDMLEAMEADDFDQLPSPFYTRSFLKKYAWAVELDDQIVLDAYDSGSMITYEEVDVDEDELTGRRRSSKKKKKKTSFLPLFYFILFALSILIFVTYYVWNYIQTQPEEPSLSNYSVVQSTSSTSSVPHSSSSSSSSIESAISVSGEGNHVEIAYKTSKETVKLQLAVSDVTSWVSVSESELEGGVTLSPKKKSAEATVATKSPVTITLGVVKGVDLTVDNQTVDLSKLTAQTGQITVTFTKN.

Topologically, residues 1–110 (MTSMRKKTIG…SSKKKKKKTS (110 aa)) are cytoplasmic. A helical; Signal-anchor for type II membrane protein membrane pass occupies residues 111 to 131 (FLPLFYFILFALSILIFVTYY). Residues 132 to 276 (VWNYIQTQPE…GQITVTFTKN (145 aa)) are Extracellular-facing.

This sequence belongs to the RodZ family. In terms of assembly, interacts with MltG and MreC in the elongasome. Interacts with KhpB (also called EloR/Jag).

The protein resides in the cell membrane. Its function is as follows. Cytoskeletal protein that is involved in cell-shape control through regulation of the length of the long axis. Probably part of the elongasome which synthesizes peripheral peptidoglycan. The sequence is that of Cytoskeleton protein RodZ from Streptococcus pneumoniae (strain ATCC BAA-255 / R6).